Consider the following 194-residue polypeptide: Cysteine and glycine-rich protein 3 (194 aa).

The segment at 1–5 is interaction with TCAP; the sequence is MPNWG. Positions 10–61 constitute an LIM zinc-binding 1 domain; sequence CGACEKTVYHAEEIQCNGRSFHKTCFHCMACRKALDSTTVAAHESEIYCKVC. Positions 64–69 match the Nuclear localization signal motif; the sequence is RRYGPK. The segment at 94 to 105 is interaction with CLF2; that stretch reads QSPKPARAATTS. Phosphoserine occurs at positions 95, 111, and 153. Residues 120–171 form the LIM zinc-binding 2 domain; that stretch reads CPRCGKSVYAAEKVMGGGKPWHKTCFRCAICGKSLESTNVTDKDGELYCKVC.

As to quaternary structure, self-associates. Oligomeric in the cytoplasm and monomeric in the nucleus. Homooligomers preferentially form along the actin cytoskeleton. Interacts with TCAP. Interacts with LDHD, MYOD1, MYOG, ACTN2, NRAP, MYF6. Interacts (via N-terminus)D with GLRX3 (via C-terminus) and PPP3CA; GLRX3 and calcineurin compete for interaction with CSRP3. Interacts with CFL2; the stoichiometry influences F-actin depolymerization and possibly two molecules of CFL2 can interact with one molecule of CSRP3 resulting in the highest functional impact; the interaction is stronger with phosphorylated CFL2. In terms of processing, phosphorylated by PKC/PRKCA.

Its subcellular location is the nucleus. It is found in the cytoplasm. It localises to the cytoskeleton. The protein localises to the myofibril. The protein resides in the sarcomere. Its subcellular location is the z line. In terms of biological role, positive regulator of myogenesis. Acts as a cofactor for myogenic bHLH transcription factors such as MYOD1, and probably MYOG and MYF6. Enhances the DNA-binding activity of the MYOD1:TCF3 isoform E47 complex and may promote formation of a functional MYOD1:TCF3 isoform E47:MEF2A complex involved in myogenesis. Plays a crucial and specific role in the organization of cytosolic structures in cardiomyocytes. Could play a role in mechanical stretch sensing. May be a scaffold protein that promotes the assembly of interacting proteins at Z-line structures. It is essential for calcineurin anchorage to the Z line. Required for stress-induced calcineurin-NFAT activation. The role in regulation of cytoskeleton dynamics by association with CFL2 is reported conflictingly. Proposed to contribute to the maintenance of muscle cell integrity through an actin-based mechanism. Can directly bind to actin filaments, cross-link actin filaments into bundles without polarity selectivity and protect them from dilution- and cofilin-mediated depolymerization; the function seems to involve its self-association. In vitro can inhibit PKC/PRKCA activity. Proposed to be involved in cardiac stress signaling by down-regulating excessive PKC/PRKCA signaling. The chain is Cysteine and glycine-rich protein 3 (Csrp3) from Mus musculus (Mouse).